Consider the following 264-residue polypeptide: Leukocyte receptor cluster member 1 (264 aa).

Disordered regions lie at residues 1 to 37 (MNIL…RERR) and 49 to 76 (FLRK…SGPV). The span at 12 to 37 (RNKDNVARVRRDEAQAREEEKERERR) shows a compositional bias: basic and acidic residues. Residues 16 to 46 (NVARVRRDEAQAREEEKERERRVLLAQQEAR) are a coiled coil. Serine 59 is modified (phosphoserine). Residues 59-75 (SLPELEAAEAGAPGSGP) show a composition bias toward low complexity. Residues 89–115 (VIRGNKEYKEEKRQEKERQEKALGILT) are a coiled coil. The interval 118 to 264 (GQSAAEAQTQ…PRQQDPHLTH (147 aa)) is disordered. Composition is skewed to basic and acidic residues over residues 146–162 (PDEK…EMQK) and 170–214 (HGGD…RSRA). A coiled-coil region spans residues 196–222 (LDQLRAERLRREAAERSRAEALLARVQ). Residue serine 245 is modified to Phosphoserine.

This Homo sapiens (Human) protein is Leukocyte receptor cluster member 1 (LENG1).